Reading from the N-terminus, the 387-residue chain is Succinate--CoA ligase [ADP-forming] subunit beta (387 aa).

The region spanning 9–243 is the ATP-grasp domain; the sequence is KEILSTYGIP…YSQLDPLEIT (235 aa). ATP is bound by residues Lys-45, 52 to 54, Glu-98, Val-101, and Glu-106; that span reads GRG. Asn-198 and Asp-212 together coordinate Mg(2+). Residues Asn-263 and 320-322 each bind substrate; that span reads GIM.

Belongs to the succinate/malate CoA ligase beta subunit family. Heterotetramer of two alpha and two beta subunits. Mg(2+) is required as a cofactor.

The catalysed reaction is succinate + ATP + CoA = succinyl-CoA + ADP + phosphate. It carries out the reaction GTP + succinate + CoA = succinyl-CoA + GDP + phosphate. It functions in the pathway carbohydrate metabolism; tricarboxylic acid cycle; succinate from succinyl-CoA (ligase route): step 1/1. Succinyl-CoA synthetase functions in the citric acid cycle (TCA), coupling the hydrolysis of succinyl-CoA to the synthesis of either ATP or GTP and thus represents the only step of substrate-level phosphorylation in the TCA. The beta subunit provides nucleotide specificity of the enzyme and binds the substrate succinate, while the binding sites for coenzyme A and phosphate are found in the alpha subunit. This Trichlorobacter lovleyi (strain ATCC BAA-1151 / DSM 17278 / SZ) (Geobacter lovleyi) protein is Succinate--CoA ligase [ADP-forming] subunit beta.